The primary structure comprises 428 residues: Glutamate-1-semialdehyde 2,1-aminomutase (428 aa).

K265 is modified (N6-(pyridoxal phosphate)lysine).

Belongs to the class-III pyridoxal-phosphate-dependent aminotransferase family. HemL subfamily. Homodimer. Requires pyridoxal 5'-phosphate as cofactor.

It is found in the cytoplasm. The enzyme catalyses (S)-4-amino-5-oxopentanoate = 5-aminolevulinate. The protein operates within porphyrin-containing compound metabolism; protoporphyrin-IX biosynthesis; 5-aminolevulinate from L-glutamyl-tRNA(Glu): step 2/2. The protein is Glutamate-1-semialdehyde 2,1-aminomutase of Thioalkalivibrio sulfidiphilus (strain HL-EbGR7).